Consider the following 549-residue polypeptide: CTP synthase (549 aa).

Residues 1–267 are amidoligase domain; that stretch reads MAKFVFITGG…CREVLDVLQL (267 aa). Residue serine 13 coordinates CTP. Serine 13 is a binding site for UTP. ATP-binding positions include 14–19 and aspartate 71; that span reads SIGKGI. Aspartate 71 and glutamate 141 together coordinate Mg(2+). Residues 148–150, 188–193, and lysine 224 each bind CTP; these read DIE and KTKPTQ. UTP contacts are provided by residues 188–193 and lysine 224; that span reads KTKPTQ. A Glutamine amidotransferase type-1 domain is found at 292–534; the sequence is KVALVGKYVQ…IEAAQQRLPD (243 aa). L-glutamine is bound at residue glycine 354. Residue cysteine 381 is the Nucleophile; for glutamine hydrolysis of the active site. Residues 382–385, glutamate 405, and arginine 462 contribute to the L-glutamine site; that span reads LGMQ. Catalysis depends on residues histidine 507 and glutamate 509.

It belongs to the CTP synthase family. As to quaternary structure, homotetramer.

The enzyme catalyses UTP + L-glutamine + ATP + H2O = CTP + L-glutamate + ADP + phosphate + 2 H(+). It catalyses the reaction L-glutamine + H2O = L-glutamate + NH4(+). The catalysed reaction is UTP + NH4(+) + ATP = CTP + ADP + phosphate + 2 H(+). It participates in pyrimidine metabolism; CTP biosynthesis via de novo pathway; CTP from UDP: step 2/2. Its activity is regulated as follows. Allosterically activated by GTP, when glutamine is the substrate; GTP has no effect on the reaction when ammonia is the substrate. The allosteric effector GTP functions by stabilizing the protein conformation that binds the tetrahedral intermediate(s) formed during glutamine hydrolysis. Inhibited by the product CTP, via allosteric rather than competitive inhibition. Its function is as follows. Catalyzes the ATP-dependent amination of UTP to CTP with either L-glutamine or ammonia as the source of nitrogen. Regulates intracellular CTP levels through interactions with the four ribonucleotide triphosphates. This is CTP synthase from Synechococcus sp. (strain CC9902).